Here is a 147-residue protein sequence, read N- to C-terminus: uncharacterized protein (147 aa).

Residues 4–120 (KWAKRFFQMA…EQTEDFLSRW (117 aa)) form the CMP/dCMP-type deaminase domain. Residue H67 coordinates Zn(2+). The active-site Proton donor is the E69. Residues C92 and C95 each coordinate Zn(2+).

Belongs to the cytidine and deoxycytidylate deaminase family. Zn(2+) is required as a cofactor.

This is an uncharacterized protein from Aliivibrio fischeri (Vibrio fischeri).